The following is a 60-amino-acid chain: Large ribosomal subunit protein bL32 (60 aa).

The segment at M1–D60 is disordered. Over residues K7–R16 the composition is skewed to basic residues. A compositionally biased stretch (polar residues) spans L22–K31.

Belongs to the bacterial ribosomal protein bL32 family.

The sequence is that of Large ribosomal subunit protein bL32 from Francisella tularensis subsp. holarctica (strain LVS).